A 124-amino-acid chain; its full sequence is MRCLCSWLCLLLPLSACFPLLDRRGPTDIGDIGARMSWVQLTEGHTPRSVQSPRPQALLVVAKEQQASRREHTGFRLGRQDSGSEATGFLPTDSEKASGPLGTLAEELSSYSRRKGGFSFRFGR.

A signal peptide spans 1 to 17 (MRCLCSWLCLLLPLSAC). The propeptide occupies 18–79 (FPLLDRRGPT…REHTGFRLGR (62 aa)). A disordered region spans residues 63-100 (KEQQASRREHTGFRLGRQDSGSEATGFLPTDSEKASGP). Gln-80 carries the pyrrolidone carboxylic acid modification. Phe-122 carries the post-translational modification Phenylalanine amide.

Belongs to the RFamide neuropeptide family. Ligand for the G-protein coupled receptor QRFPR/GPR103. In terms of tissue distribution, expressed in the brain with highest expression levels in the hypothalamus and optic nerve. Also expressed in the trachea and mammary gland.

It is found in the secreted. Functionally, stimulates feeding and grooming behavior, metabolic rate and locomotor activity and increases blood pressure. May have orexigenic activity. May promote aldosterone secretion by the adrenal gland. The protein is Orexigenic neuropeptide QRFP (Qrfp) of Rattus norvegicus (Rat).